We begin with the raw amino-acid sequence, 716 residues long: Astellifadiene synthase (716 aa).

The terpene cyclase stretch occupies residues 1 to 323; that stretch reads MEFKYSTLID…SPRYYTDAKF (323 aa). Residue aspartate 92 participates in Mg(2+) binding. Residues aspartate 92, 179-182, asparagine 223, 227-231, and 316-317 contribute to the substrate site; these read RIYD, SWEKE, and RY. The DDXXD 1 motif lies at 92–96; sequence DDVID. Residues 223-231 carry the NSE/DTE motif; that stretch reads NDLVSWEKE. The prenyltransferase stretch occupies residues 324 to 713; it reads SQRQLDWIKN…FQLKLILQFL (390 aa). Residues lysine 436, arginine 439, and histidine 468 each contribute to the isopentenyl diphosphate site. Aspartate 475 and aspartate 479 together coordinate Mg(2+). The DDXXD 2 signature appears at 475 to 479; sequence DDVED. Residue arginine 484 participates in dimethylallyl diphosphate binding. Position 485 (arginine 485) interacts with isopentenyl diphosphate. Dimethylallyl diphosphate-binding residues include lysine 562, threonine 563, glutamine 598, asparagine 605, lysine 615, and lysine 625.

In the N-terminal section; belongs to the terpene synthase family. It in the C-terminal section; belongs to the FPP/GGPP synthase family. In terms of assembly, hexamer. The cofactor is Mg(2+).

It catalyses the reaction isopentenyl diphosphate + (2E,6E)-farnesyl diphosphate = (2E,6E,10E)-geranylgeranyl diphosphate + diphosphate. The catalysed reaction is isopentenyl diphosphate + (2E,6E,10E)-geranylgeranyl diphosphate = (2E,6E,10E,14E)-geranylfarnesyl diphosphate + diphosphate. The enzyme catalyses (2E,6E,10E,14E)-geranylfarnesyl diphosphate = astellifadiene + diphosphate. It functions in the pathway secondary metabolite biosynthesis; terpenoid biosynthesis. Bifunctional terpene synthase that converts dimethylallyl diphosphate (DMAPP) and isopentenyl diphosphate (IPP) into astellifadiene. The C-terminal prenyltransferase (PT) domain of EvAS catalyzes formation of geranylfarnesyl pyrophosphate (GFPP), whereas the N-terminal terpene cyclase (TC) domain catalyzes the cyclization of GFPP to astellifadiene. This chain is Astellifadiene synthase, found in Emericella variicolor (Aspergillus stellatus).